The chain runs to 225 residues: RNA-binding protein 24-A (225 aa).

The region spanning 11–88 (TKIFVGGLPY…RKANVNLAYL (78 aa)) is the RRM domain.

The protein localises to the nucleus. The protein resides in the cytoplasm. Its function is as follows. Multifunctional RNA-binding protein involved in the regulation of pre-mRNA splicing, mRNA stability and mRNA translation important for cell fate decision and differentiation. Plays a major role in pre-mRNA alternative splicing regulation. Mediates preferentially muscle-specific exon inclusion in numerous mRNAs important for striated cardiac and skeletal muscle cell differentiation. Binds to intronic splicing enhancer (ISE) composed of stretches of GU-rich motifs localized in flanking intron of exon that will be included by alternative splicing. Involved in embryonic stem cell (ESC) transition to cardiac cell differentiation by promoting pre-mRNA alternative splicing events of several pluripotency and/or differentiation genes. Plays a role in the regulation of mRNA stability and mRNA translation to which it is bound. Involved in myogenic differentiation by regulating myog levels. Binds to a huge amount of mRNAs. Required for embryonic heart development, sarcomer and M-band formation in striated muscles. The polypeptide is RNA-binding protein 24-A (rbm24-a) (Xenopus laevis (African clawed frog)).